The following is a 321-amino-acid chain: UPF0026 protein MJ1312 (321 aa).

Residues R11–N236 enclose the Radical SAM core domain. [4Fe-4S] cluster-binding residues include C27, C31, and C34.

The protein belongs to the UPF0026 family. [4Fe-4S] cluster is required as a cofactor.

In Methanocaldococcus jannaschii (strain ATCC 43067 / DSM 2661 / JAL-1 / JCM 10045 / NBRC 100440) (Methanococcus jannaschii), this protein is UPF0026 protein MJ1312.